We begin with the raw amino-acid sequence, 424 residues long: Tyrosine--tRNA ligase (424 aa).

Y37 is a binding site for L-tyrosine. A 'HIGH' region motif is present at residues 42–51 (PTADSLHLGH). L-tyrosine-binding residues include Y175 and Q179. A 'KMSKS' region motif is present at residues 235-239 (KFGKT). K238 contacts ATP. Positions 357–414 (ADLMQALVDAELQPSRGQARKTIASNAVTINGEKQSDPEYIFNDEDRLFGRYTLLRRG) constitute an S4 RNA-binding domain.

It belongs to the class-I aminoacyl-tRNA synthetase family. TyrS type 1 subfamily. As to quaternary structure, homodimer.

It is found in the cytoplasm. The catalysed reaction is tRNA(Tyr) + L-tyrosine + ATP = L-tyrosyl-tRNA(Tyr) + AMP + diphosphate + H(+). In terms of biological role, catalyzes the attachment of tyrosine to tRNA(Tyr) in a two-step reaction: tyrosine is first activated by ATP to form Tyr-AMP and then transferred to the acceptor end of tRNA(Tyr). In Salmonella agona (strain SL483), this protein is Tyrosine--tRNA ligase.